The primary structure comprises 552 residues: uncharacterized protein (552 aa).

The DhaL domain occupies 8–200 (KLFADMIIQG…LLCVYEGFLK (193 aa)).

This is an uncharacterized protein from Staphylococcus epidermidis (strain ATCC 35984 / DSM 28319 / BCRC 17069 / CCUG 31568 / BM 3577 / RP62A).